We begin with the raw amino-acid sequence, 338 residues long: NADPH dehydrogenase (338 aa).

Residue Tyr28 coordinates substrate. FMN contacts are provided by Ala60 and Gln102. 164 to 167 (HAAH) contributes to the substrate binding site. Residues Arg215 and 307-308 (AR) each bind FMN.

The protein belongs to the NADH:flavin oxidoreductase/NADH oxidase family. NamA subfamily. Homotetramer. FMN serves as cofactor.

It carries out the reaction A + NADPH + H(+) = AH2 + NADP(+). Catalyzes the reduction of the double bond of an array of alpha,beta-unsaturated aldehydes and ketones. It also reduces the nitro group of nitroester and nitroaromatic compounds. It could have a role in detoxification processes. In Bacillus velezensis (strain DSM 23117 / BGSC 10A6 / LMG 26770 / FZB42) (Bacillus amyloliquefaciens subsp. plantarum), this protein is NADPH dehydrogenase.